The sequence spans 235 residues: Secretory carrier-associated membrane protein 5 (235 aa).

The Cytoplasmic segment spans residues 1–39; sequence MAEKVNNFPPLPKFIPLKPCFYQDFEADIPPQHVSMTKR. A helical membrane pass occupies residues 40–60; that stretch reads LYYLWMLNSVTLAVNLVGCLA. Residues 61 to 67 lie on the Extracellular side of the membrane; sequence WLIGGGG. The helical transmembrane segment at 68-88 threads the bilayer; that stretch reads ATNFGLAFLWLILFTPCSYVC. Over 89–102 the chain is Cytoplasmic; it reads WFRPIYKAFKTDSS. Residues 103-125 traverse the membrane as a helical segment; that stretch reads FSFMAFFFTFMAQLVISIIQAVG. Residues 126–148 are Extracellular-facing; sequence IPGWGVCGWIATISFFGTNIGSA. A helical membrane pass occupies residues 149–169; the sequence is VVMLIPTVMFTVMAVFSFIAL. Residues 170 to 235 lie on the Cytoplasmic side of the membrane; it reads SMVHKFYRGS…TPNYTYSNEM (66 aa).

The protein belongs to the SCAMP family. SCAMP5 subfamily. In terms of assembly, interacts (via C-terminal part) with SYT1 and SYT2; interaction with synaptotagmins making a link with the SNARE molecules. Interacts with SLC9A7. As to expression, expressed both by neuronal and non-neuronal tissues. Expressed in brain, stomach, thyroid, spinal cord, lymph node, trachea, adrenal gland, bone marrow and in the different parts of brain. In thyroid tissues, it is expressed by the follicular epithelial cells. In the adrenal gland tissues it is detected in the zona fasciculata of the cortex region (at protein level).

The protein localises to the cell membrane. The protein resides in the golgi apparatus membrane. It localises to the golgi apparatus. It is found in the trans-Golgi network membrane. Its subcellular location is the recycling endosome membrane. The protein localises to the cytoplasmic vesicle. The protein resides in the secretory vesicle. It localises to the synaptic vesicle membrane. Its function is as follows. Required for the calcium-dependent exocytosis of signal sequence-containing cytokines such as CCL5. Probably acts in cooperation with the SNARE machinery. May play a role in accumulation of expanded polyglutamine (polyQ) protein huntingtin (HTT) in case of endoplasmic reticulum stress by inhibiting the endocytosis pathway. This is Secretory carrier-associated membrane protein 5 (SCAMP5) from Homo sapiens (Human).